Here is a 102-residue protein sequence, read N- to C-terminus: Co-chaperonin GroES (102 aa).

This sequence belongs to the GroES chaperonin family. In terms of assembly, heptamer of 7 subunits arranged in a ring. Interacts with the chaperonin GroEL.

It localises to the cytoplasm. Together with the chaperonin GroEL, plays an essential role in assisting protein folding. The GroEL-GroES system forms a nano-cage that allows encapsulation of the non-native substrate proteins and provides a physical environment optimized to promote and accelerate protein folding. GroES binds to the apical surface of the GroEL ring, thereby capping the opening of the GroEL channel. The protein is Co-chaperonin GroES of Vibrio harveyi (Beneckea harveyi).